The primary structure comprises 88 residues: ATPase inhibitor mai-1, mitochondrial (88 aa).

The segment covering 1 to 18 has biased composition (gly residues); it reads MSGSGSGSGAGHGGGSGG. The interval 1–41 is disordered; that stretch reads MSGSGSGSGAGHGGGSGGSIREAGGSLGMMGATREEEYFRR. Residues 39-87 are a coiled coil; that stretch reads FRRQQKDQLDNLKKKLEADMTQSQQEIRDHEKVLEQHQQRLKEIEKGHG.

This sequence belongs to the ATPase inhibitor family. Post-translationally, does not seem to include a transit peptide.

The protein localises to the mitochondrion. Thought to be a regulatory component of the ATP-synthesizing complex in the mitochondria. The polypeptide is ATPase inhibitor mai-1, mitochondrial (mai-1) (Caenorhabditis elegans).